We begin with the raw amino-acid sequence, 147 residues long: Large ribosomal subunit protein uL16c (147 aa).

Over residues 1–17 the composition is skewed to basic residues; sequence MLSPKRTRFRKQHRGRM. Residues 1 to 20 form a disordered region; that stretch reads MLSPKRTRFRKQHRGRMKGI.

This sequence belongs to the universal ribosomal protein uL16 family. Part of the 50S ribosomal subunit.

Its subcellular location is the plastid. The protein resides in the chloroplast. This is Large ribosomal subunit protein uL16c from Ipomoea purpurea (Common morning glory).